A 148-amino-acid polypeptide reads, in one-letter code: Snaclec 6 (148 aa).

The N-terminal stretch at 1-23 (MGRFIFVSFGLLVMFLSLSGTEA) is a signal peptide. 3 disulfide bridges follow: Cys27–Cys38, Cys55–Cys144, and Cys121–Cys136. A C-type lectin domain is found at 34–145 (YDQNCYKAFE…CSGTHNFVCK (112 aa)). Asn130 carries an N-linked (GlcNAc...) asparagine glycan.

It belongs to the snaclec family. In terms of assembly, heterodimer; disulfide-linked. In terms of tissue distribution, expressed by the venom gland.

The protein localises to the secreted. In terms of biological role, interferes with one step of hemostasis (modulation of platelet aggregation, or coagulation cascade, for example). The sequence is that of Snaclec 6 from Bitis arietans (African puff adder).